We begin with the raw amino-acid sequence, 408 residues long: ATP phosphoribosyltransferase regulatory subunit (408 aa).

The protein belongs to the class-II aminoacyl-tRNA synthetase family. HisZ subfamily. Heteromultimer composed of HisG and HisZ subunits.

The protein localises to the cytoplasm. Its pathway is amino-acid biosynthesis; L-histidine biosynthesis; L-histidine from 5-phospho-alpha-D-ribose 1-diphosphate: step 1/9. Its function is as follows. Required for the first step of histidine biosynthesis. May allow the feedback regulation of ATP phosphoribosyltransferase activity by histidine. The chain is ATP phosphoribosyltransferase regulatory subunit from Gloeothece citriformis (strain PCC 7424) (Cyanothece sp. (strain PCC 7424)).